We begin with the raw amino-acid sequence, 245 residues long: MGQKSNPNGLRLGIIKNWDSKWFANFKKTPQFIHEDFCIRNFINKNYSKALIAQIEIERSKKKDKEIIKINLHVAKSNIINGKDNESLKKITKQIEQITKKEVFFNVIEIKNPDKVAILVAKTMAEQLEQRFYFRRVQKMAIQKVLKTGVKGVKTLISGRLGGLEMARSEGYLEGRVPLNTLRADVEYAFTEAHTTYGSFGVKVWIFHGDVLPGETILDTRKPFAIKSNYISKNNKKSNNYKGDK.

The KH type-2 domain occupies 39–111 (IRNFINKNYS…EVFFNVIEIK (73 aa)).

It belongs to the universal ribosomal protein uS3 family. Part of the 30S ribosomal subunit. Forms a tight complex with proteins S10 and S14.

Its function is as follows. Binds the lower part of the 30S subunit head. Binds mRNA in the 70S ribosome, positioning it for translation. The sequence is that of Small ribosomal subunit protein uS3 from Phytoplasma mali (strain AT).